The primary structure comprises 123 residues: Small ribosomal subunit protein uS12 (123 aa).

The tract at residues 1–25 is disordered; it reads MPTINQLVRKPRKSRSALNKAPALQ. Asp90 carries the post-translational modification 3-methylthioaspartic acid.

It belongs to the universal ribosomal protein uS12 family. In terms of assembly, part of the 30S ribosomal subunit. Contacts proteins S8 and S17. May interact with IF1 in the 30S initiation complex.

Its function is as follows. With S4 and S5 plays an important role in translational accuracy. Interacts with and stabilizes bases of the 16S rRNA that are involved in tRNA selection in the A site and with the mRNA backbone. Located at the interface of the 30S and 50S subunits, it traverses the body of the 30S subunit contacting proteins on the other side and probably holding the rRNA structure together. The combined cluster of proteins S8, S12 and S17 appears to hold together the shoulder and platform of the 30S subunit. The chain is Small ribosomal subunit protein uS12 from Ehrlichia canis (strain Jake).